Here is a 358-residue protein sequence, read N- to C-terminus: DNA replication and repair protein RecF (358 aa).

30 to 37 (GNNGSGKT) provides a ligand contact to ATP.

The protein belongs to the RecF family.

The protein localises to the cytoplasm. Its function is as follows. The RecF protein is involved in DNA metabolism; it is required for DNA replication and normal SOS inducibility. RecF binds preferentially to single-stranded, linear DNA. It also seems to bind ATP. This is DNA replication and repair protein RecF from Actinobacillus succinogenes (strain ATCC 55618 / DSM 22257 / CCUG 43843 / 130Z).